We begin with the raw amino-acid sequence, 291 residues long: Pyridoxal 5'-phosphate synthase subunit PdxS (291 aa).

D23 contacts D-ribose 5-phosphate. Catalysis depends on K80, which acts as the Schiff-base intermediate with D-ribose 5-phosphate. A D-ribose 5-phosphate-binding site is contributed by G152. R164 serves as a coordination point for D-glyceraldehyde 3-phosphate. Residues G213 and 234–235 contribute to the D-ribose 5-phosphate site; that span reads GS.

This sequence belongs to the PdxS/SNZ family. In terms of assembly, in the presence of PdxT, forms a dodecamer of heterodimers.

The enzyme catalyses aldehydo-D-ribose 5-phosphate + D-glyceraldehyde 3-phosphate + L-glutamine = pyridoxal 5'-phosphate + L-glutamate + phosphate + 3 H2O + H(+). The protein operates within cofactor biosynthesis; pyridoxal 5'-phosphate biosynthesis. Its function is as follows. Catalyzes the formation of pyridoxal 5'-phosphate from ribose 5-phosphate (RBP), glyceraldehyde 3-phosphate (G3P) and ammonia. The ammonia is provided by the PdxT subunit. Can also use ribulose 5-phosphate and dihydroxyacetone phosphate as substrates, resulting from enzyme-catalyzed isomerization of RBP and G3P, respectively. The chain is Pyridoxal 5'-phosphate synthase subunit PdxS from Streptococcus pneumoniae (strain P1031).